Consider the following 125-residue polypeptide: Histone H1-like protein HC1 (125 aa).

This sequence belongs to the histone H1/H5 family. HCT subfamily.

Its function is as follows. Might have a role analogous to that of eukaryotic histone proteins. This is Histone H1-like protein HC1 (hctA) from Chlamydia muridarum (strain MoPn / Nigg).